We begin with the raw amino-acid sequence, 252 residues long: MLSATQPVSENLPAHGCRHVAIIMDGNGRWAKKQGKIRAFGHKAGAKSVRRAVSFAANNGIDALTLYAFSSENWNRPAQEVSALMELFVWALDSEVKSLHRHNVRLRIIGDISRFNSRLQERIRKSEALTAHNTGLTLNIAANYGGRWDIVQGVRQLAELVQAGVLRPDQIDEERLGQQICMHELAPVDLVIRTGGEHRISNFLLWQIAYAELYFTDVLWPDFDEQDFEGALHAFANRERRFGGTEPGDDKA.

The active site involves Asp-25. Asp-25 contacts Mg(2+). Substrate-binding positions include Gly-26–Arg-29, Trp-30, Arg-38, His-42, and Ser-70–Glu-72. The Proton acceptor role is filled by Asn-73. The substrate site is built by Trp-74, Arg-76, and Arg-193. A Mg(2+)-binding site is contributed by His-198. Substrate is bound at residue Arg-199–Ser-201. Glu-212 is a Mg(2+) binding site.

It belongs to the UPP synthase family. Homodimer. Mg(2+) is required as a cofactor.

It catalyses the reaction 8 isopentenyl diphosphate + (2E,6E)-farnesyl diphosphate = di-trans,octa-cis-undecaprenyl diphosphate + 8 diphosphate. Functionally, catalyzes the sequential condensation of isopentenyl diphosphate (IPP) with (2E,6E)-farnesyl diphosphate (E,E-FPP) to yield (2Z,6Z,10Z,14Z,18Z,22Z,26Z,30Z,34E,38E)-undecaprenyl diphosphate (di-trans,octa-cis-UPP). UPP is the precursor of glycosyl carrier lipid in the biosynthesis of bacterial cell wall polysaccharide components such as peptidoglycan and lipopolysaccharide. The chain is Ditrans,polycis-undecaprenyl-diphosphate synthase ((2E,6E)-farnesyl-diphosphate specific) from Salmonella typhi.